Consider the following 454-residue polypeptide: Tol-Pal system protein TolB (454 aa).

Residues 1-30 form the signal peptide; it reads MNDARSITRRRFMTLTGSGLAMLGGGHAFA.

The protein belongs to the TolB family. As to quaternary structure, the Tol-Pal system is composed of five core proteins: the inner membrane proteins TolA, TolQ and TolR, the periplasmic protein TolB and the outer membrane protein Pal. They form a network linking the inner and outer membranes and the peptidoglycan layer.

The protein resides in the periplasm. Functionally, part of the Tol-Pal system, which plays a role in outer membrane invagination during cell division and is important for maintaining outer membrane integrity. The polypeptide is Tol-Pal system protein TolB (Bradyrhizobium diazoefficiens (strain JCM 10833 / BCRC 13528 / IAM 13628 / NBRC 14792 / USDA 110)).